The sequence spans 96 residues: MTVARLTDAERDALLAELPEWALREDGLAIVRTFRFADFSQAWGFMNRVALHAEKTDHHPEWFNVYNRVEVTLTTHDADGLSARDADMARAMESFL.

It belongs to the pterin-4-alpha-carbinolamine dehydratase family.

The catalysed reaction is (4aS,6R)-4a-hydroxy-L-erythro-5,6,7,8-tetrahydrobiopterin = (6R)-L-erythro-6,7-dihydrobiopterin + H2O. The chain is Putative pterin-4-alpha-carbinolamine dehydratase from Novosphingobium aromaticivorans (strain ATCC 700278 / DSM 12444 / CCUG 56034 / CIP 105152 / NBRC 16084 / F199).